Here is a 469-residue protein sequence, read N- to C-terminus: Arginine biosynthesis bifunctional protein ArgJ, mitochondrial (469 aa).

6 residues coordinate substrate: T199, K228, T239, E325, N464, and T469. Catalysis depends on T239, which acts as the Nucleophile.

This sequence belongs to the ArgJ family. Heterodimer of an alpha and a beta chain. In terms of processing, the alpha and beta chains are autoproteolytically processed from a single precursor protein within the mitochondrion.

It localises to the mitochondrion matrix. It catalyses the reaction N(2)-acetyl-L-ornithine + L-glutamate = N-acetyl-L-glutamate + L-ornithine. The catalysed reaction is L-glutamate + acetyl-CoA = N-acetyl-L-glutamate + CoA + H(+). Its pathway is amino-acid biosynthesis; L-arginine biosynthesis; L-ornithine and N-acetyl-L-glutamate from L-glutamate and N(2)-acetyl-L-ornithine (cyclic): step 1/1. The protein operates within amino-acid biosynthesis; L-arginine biosynthesis; N(2)-acetyl-L-ornithine from L-glutamate: step 1/4. Its function is as follows. Catalyzes two activities which are involved in the cyclic version of arginine biosynthesis: the synthesis of acetylglutamate from glutamate and acetyl-CoA, and of ornithine by transacetylation between acetylornithine and glutamate. In Sordaria macrospora (strain ATCC MYA-333 / DSM 997 / K(L3346) / K-hell), this protein is Arginine biosynthesis bifunctional protein ArgJ, mitochondrial.